The sequence spans 390 residues: Dynein regulatory complex subunit 5 (390 aa).

3 LRR repeats span residues 182-205 (TETL…MLAS), 210-233 (NLSI…ALAK), and 238-261 (HSVI…SLAR).

Belongs to the DRC5 family. Component of the nexin-dynein regulatory complex (N-DRC). Interacts with DRC1, DRC2, DRC3, DRC4, DRC7 and DRC11.

The protein resides in the cell projection. It localises to the cilium. Its subcellular location is the flagellum. It is found in the cytoplasm. The protein localises to the cytoskeleton. The protein resides in the flagellum axoneme. Its function is as follows. Component of the nexin-dynein regulatory complex (N-DRC) a key regulator of ciliary/flagellar motility which maintains the alignment and integrity of the distal axoneme and regulates microtubule sliding in motile axonemes. May play a role in the assembly of N-DRC. This Chlamydomonas reinhardtii (Chlamydomonas smithii) protein is Dynein regulatory complex subunit 5.